Consider the following 158-residue polypeptide: ABA-responsive protein ABR18 (158 aa).

This sequence belongs to the BetVI family.

This chain is ABA-responsive protein ABR18, found in Pisum sativum (Garden pea).